A 385-amino-acid polypeptide reads, in one-letter code: 1-deoxy-D-xylulose 5-phosphate reductoisomerase (385 aa).

NADPH contacts are provided by Thr-11, Gly-12, Ser-13, Ile-14, Gln-39, and Asn-117. Lys-118 lines the 1-deoxy-D-xylulose 5-phosphate pocket. Glu-119 contributes to the NADPH binding site. Asp-143 serves as a coordination point for Mn(2+). 4 residues coordinate 1-deoxy-D-xylulose 5-phosphate: Ser-144, Glu-145, Ser-170, and His-193. Glu-145 contacts Mn(2+). Gly-199 lines the NADPH pocket. 1-deoxy-D-xylulose 5-phosphate-binding residues include Ser-206, Asn-211, Lys-212, and Glu-215. Position 215 (Glu-215) interacts with Mn(2+).

The protein belongs to the DXR family. The cofactor is Mg(2+). It depends on Mn(2+) as a cofactor.

It carries out the reaction 2-C-methyl-D-erythritol 4-phosphate + NADP(+) = 1-deoxy-D-xylulose 5-phosphate + NADPH + H(+). It participates in isoprenoid biosynthesis; isopentenyl diphosphate biosynthesis via DXP pathway; isopentenyl diphosphate from 1-deoxy-D-xylulose 5-phosphate: step 1/6. In terms of biological role, catalyzes the NADPH-dependent rearrangement and reduction of 1-deoxy-D-xylulose-5-phosphate (DXP) to 2-C-methyl-D-erythritol 4-phosphate (MEP). This is 1-deoxy-D-xylulose 5-phosphate reductoisomerase from Thermomicrobium roseum (strain ATCC 27502 / DSM 5159 / P-2).